A 180-amino-acid polypeptide reads, in one-letter code: NADH-quinone oxidoreductase subunit I (180 aa).

4Fe-4S ferredoxin-type domains follow at residues 50–80 (LTRDPDGEERCVACNLCAVACPVGCISLQKA) and 90–119 (EFFRINFSRCIFCGMCEEACPTTAIQLTPD). 8 residues coordinate [4Fe-4S] cluster: Cys60, Cys63, Cys66, Cys70, Cys99, Cys102, Cys105, and Cys109.

It belongs to the complex I 23 kDa subunit family. In terms of assembly, NDH-1 is composed of 14 different subunits. Subunits NuoA, H, J, K, L, M, N constitute the membrane sector of the complex. Requires [4Fe-4S] cluster as cofactor.

The protein resides in the cell inner membrane. It carries out the reaction a quinone + NADH + 5 H(+)(in) = a quinol + NAD(+) + 4 H(+)(out). Functionally, NDH-1 shuttles electrons from NADH, via FMN and iron-sulfur (Fe-S) centers, to quinones in the respiratory chain. The immediate electron acceptor for the enzyme in this species is believed to be ubiquinone. Couples the redox reaction to proton translocation (for every two electrons transferred, four hydrogen ions are translocated across the cytoplasmic membrane), and thus conserves the redox energy in a proton gradient. The sequence is that of NADH-quinone oxidoreductase subunit I from Acinetobacter baumannii (strain ACICU).